The chain runs to 497 residues: Probable cytosol aminopeptidase (497 aa).

Mn(2+)-binding residues include K267 and D272. K279 is a catalytic residue. Mn(2+) contacts are provided by D290, D349, and E351. Residue R353 is part of the active site.

It belongs to the peptidase M17 family. Requires Mn(2+) as cofactor.

The protein resides in the cytoplasm. It carries out the reaction Release of an N-terminal amino acid, Xaa-|-Yaa-, in which Xaa is preferably Leu, but may be other amino acids including Pro although not Arg or Lys, and Yaa may be Pro. Amino acid amides and methyl esters are also readily hydrolyzed, but rates on arylamides are exceedingly low.. The enzyme catalyses Release of an N-terminal amino acid, preferentially leucine, but not glutamic or aspartic acids.. Functionally, presumably involved in the processing and regular turnover of intracellular proteins. Catalyzes the removal of unsubstituted N-terminal amino acids from various peptides. This is Probable cytosol aminopeptidase from Pseudomonas entomophila (strain L48).